The sequence spans 449 residues: Dolichyl-diphosphooligosaccharide--protein glycosyltransferase 48 kDa subunit (449 aa).

The N-terminal stretch at 1 to 18 (MMWKALLIAVLAIAHCQA) is a signal peptide. At 19-412 (VLETDANTLV…ERFIPSAFPY (394 aa)) the chain is on the lumenal side. The chain crosses the membrane as a helical span at residues 413-433 (YTSAFSMMIGVFVFSFVFLHF). Residues 434–449 (KDEPVGRAAKEDKKSQ) are Cytoplasmic-facing.

This sequence belongs to the DDOST 48 kDa subunit family. As to quaternary structure, component of the oligosaccharyltransferase (OST) complex.

It localises to the endoplasmic reticulum membrane. Its pathway is protein modification; protein glycosylation. Its function is as follows. Subunit of the oligosaccharyl transferase (OST) complex that catalyzes the initial transfer of a defined glycan (Glc(3)Man(9)GlcNAc(2) in eukaryotes) from the lipid carrier dolichol-pyrophosphate to an asparagine residue within an Asn-X-Ser/Thr consensus motif in nascent polypeptide chains, the first step in protein N-glycosylation. N-glycosylation occurs cotranslationally and the complex associates with the Sec61 complex at the channel-forming translocon complex that mediates protein translocation across the endoplasmic reticulum (ER). All subunits are required for a maximal enzyme activity. Required for the assembly of both SST3A- and SS3B-containing OST complexes. In Drosophila melanogaster (Fruit fly), this protein is Dolichyl-diphosphooligosaccharide--protein glycosyltransferase 48 kDa subunit (Ost48).